Consider the following 345-residue polypeptide: MMSKKMKVLVVDDSPVFRALLSEIINSDPQLEVIGAAEDPYQAREMIKALKPDVLTLDIEMPKMNGVQFLKNLMRLHPLPVVMISTLTQHGADATLMALELGAVDYFPKPSVANTADMLGYRSLVNEKIRMAAQAQVGANQSMSPAVASSSAVSTSQYQLIAIGASTGGTEAVKHLLSALPASMPPIVITQHISAMFSGPFASRLDASCALSVSELTQGEVALKANHAYVAPGDKHLMVFRRGGQLYAHLDDSPAVNRHKPSVDVMFGSVAESLKGKAIGVILTGMGKDGAQGMLQMKQQGAITVAQDEQSCVVYGMPRAAVECGAAMHIKPLNKLPQFLCDLLS.

The Response regulatory domain maps to 7-124 (KVLVVDDSPV…TADMLGYRSL (118 aa)). At aspartate 58 the chain carries 4-aspartylphosphate. The region spanning 154–345 (STSQYQLIAI…LPQFLCDLLS (192 aa)) is the CheB-type methylesterase domain. Catalysis depends on residues serine 166, histidine 192, and aspartate 289.

This sequence belongs to the CheB family. In terms of processing, phosphorylated by CheA. Phosphorylation of the N-terminal regulatory domain activates the methylesterase activity.

It localises to the cytoplasm. The enzyme catalyses [protein]-L-glutamate 5-O-methyl ester + H2O = L-glutamyl-[protein] + methanol + H(+). It carries out the reaction L-glutaminyl-[protein] + H2O = L-glutamyl-[protein] + NH4(+). Functionally, involved in chemotaxis. Part of a chemotaxis signal transduction system that modulates chemotaxis in response to various stimuli. Catalyzes the demethylation of specific methylglutamate residues introduced into the chemoreceptors (methyl-accepting chemotaxis proteins or MCP) by CheR. Also mediates the irreversible deamidation of specific glutamine residues to glutamic acid. The chain is Protein-glutamate methylesterase/protein-glutamine glutaminase 2 from Vibrio vulnificus (strain YJ016).